A 62-amino-acid chain; its full sequence is SPbeta prophage-derived uncharacterized protein YonU (62 aa).

Residues 1-32 adopt a coiled-coil conformation; sequence MEKKFLDAIQQLTKELEMLKKDIDSIKEATVR.

The sequence is that of SPbeta prophage-derived uncharacterized protein YonU (yonU) from Bacillus subtilis (strain 168).